The sequence spans 224 residues: Large ribosomal subunit protein uL11c (224 aa).

The N-terminal 66 residues, 1–66 (MAQPLVAAPS…SHRRLSIVAM (66 aa)), are a transit peptide targeting the chloroplast. Lysine 75 and lysine 111 each carry N6,N6,N6-trimethyllysine.

As to quaternary structure, component of the chloroplast large ribosomal subunit (LSU). Mature 70S chloroplast ribosomes of higher plants consist of a small (30S) and a large (50S) subunit. The 30S small subunit contains 1 molecule of ribosomal RNA (16S rRNA) and 24 different proteins. The 50S large subunit contains 3 rRNA molecules (23S, 5S and 4.5S rRNA) and 33 different proteins.

It localises to the plastid. Its subcellular location is the chloroplast. Its function is as follows. Component of the chloroplast ribosome (chloro-ribosome), a dedicated translation machinery responsible for the synthesis of chloroplast genome-encoded proteins, including proteins of the transcription and translation machinery and components of the photosynthetic apparatus. This is Large ribosomal subunit protein uL11c (rpl11) from Spinacia oleracea (Spinach).